The sequence spans 134 residues: ATP synthase epsilon chain (134 aa).

Belongs to the ATPase epsilon chain family. In terms of assembly, F-type ATPases have 2 components, CF(1) - the catalytic core - and CF(0) - the membrane proton channel. CF(1) has five subunits: alpha(3), beta(3), gamma(1), delta(1), epsilon(1). CF(0) has three main subunits: a, b and c.

The protein localises to the cell membrane. Functionally, produces ATP from ADP in the presence of a proton gradient across the membrane. The protein is ATP synthase epsilon chain of Clostridium botulinum (strain Alaska E43 / Type E3).